The following is a 390-amino-acid chain: Centrosomal protein of 44 kDa (390 aa).

The binds with microtubules and centrioles stretch occupies residues 11-195 (RNLEQVLRLL…ISEDTLSPIT (185 aa)). A coiled-coil region spans residues 233–269 (EITALQTMLAECQENLKKLTSIEKRLDCLEQKMKGKV). The disordered stretch occupies residues 322-348 (RKSEVERPASIPLSSGYSTASSDSTPR). Phosphoserine is present on residues S331 and S345. Low complexity predominate over residues 335–345 (SSGYSTASSDS). Position 346 is a phosphothreonine (T346). Positions 361–385 (SEETTIQKMERMKKMFEETAELLKC) form a coiled coil.

As to quaternary structure, interacts with CROCC. Interacts with POC1B; the interaction is direct and recruits POC1B to centriolar microtubules. Binds to centriolar microtubules.

The protein resides in the cytoplasm. It localises to the cytoskeleton. The protein localises to the microtubule organizing center. It is found in the centrosome. Its subcellular location is the centriole. The protein resides in the spindle pole. It localises to the midbody. Centriole-enriched microtubule-binding protein involved in centriole biogenesis. In collaboration with CEP295 and POC1B, is required for the centriole-to-centrosome conversion by ensuring the formation of bona fide centriole wall. Functions as a linker component that maintains centrosome cohesion. Associates with CROCC and regulates its stability and localization to the centrosome. This Homo sapiens (Human) protein is Centrosomal protein of 44 kDa (CEP44).